Consider the following 93-residue polypeptide: Large ribosomal subunit protein bL31B (93 aa).

This sequence belongs to the bacterial ribosomal protein bL31 family. Type B subfamily. In terms of assembly, part of the 50S ribosomal subunit.

This is Large ribosomal subunit protein bL31B from Psychrobacter arcticus (strain DSM 17307 / VKM B-2377 / 273-4).